The following is a 295-amino-acid chain: Protein PHR1-LIKE 2 (295 aa).

In terms of domain architecture, HTH myb-type spans 38-98 (TDPKPRLRWT…HLQKFRLGRQ (61 aa)). Residues 69–94 (PKTIMRTMGVKGLTLYHLKSHLQKFR) constitute a DNA-binding region (H-T-H motif). Residues 96–138 (GRQAGKESTENSKDASCVGESQDTGSSSTSSMRMAQQEQNEGY) form a disordered region. The span at 99–108 (AGKESTENSK) shows a compositional bias: basic and acidic residues. Residues 127–138 (MRMAQQEQNEGY) show a composition bias toward polar residues. The stretch at 141-161 (TEALRAQMEVQRRLHDQLEVQ) forms a coiled coil. An LHEQLE motif is present at residues 154 to 159 (LHDQLE).

Belongs to the MYB-CC family. In terms of assembly, homo- and heterodimers. Interacts with PHL3, but not with PHR1.

It is found in the nucleus. Transcriptional activator. Acts redundantly with PHR1 as a key component of the central regulatory system controlling transcriptional responses to Pi starvation. Binds in a sequence-specific manner to phosphate starvation-regulated promoters. In Arabidopsis thaliana (Mouse-ear cress), this protein is Protein PHR1-LIKE 2.